A 405-amino-acid polypeptide reads, in one-letter code: L-carnitine CoA-transferase (405 aa).

K97 and R104 together coordinate CoA. D169 functions as the Nucleophile in the catalytic mechanism.

It belongs to the CoA-transferase III family. CaiB subfamily. As to quaternary structure, homodimer.

It is found in the cytoplasm. The enzyme catalyses crotonobetainyl-CoA + (R)-carnitine = crotonobetaine + (R)-carnitinyl-CoA. It carries out the reaction 4-(trimethylamino)butanoyl-CoA + (R)-carnitine = (R)-carnitinyl-CoA + 4-(trimethylamino)butanoate. The protein operates within amine and polyamine metabolism; carnitine metabolism. Its function is as follows. Catalyzes the reversible transfer of the CoA moiety from gamma-butyrobetainyl-CoA to L-carnitine to generate L-carnitinyl-CoA and gamma-butyrobetaine. Is also able to catalyze the reversible transfer of the CoA moiety from gamma-butyrobetainyl-CoA or L-carnitinyl-CoA to crotonobetaine to generate crotonobetainyl-CoA. In Salmonella gallinarum (strain 287/91 / NCTC 13346), this protein is L-carnitine CoA-transferase.